Consider the following 824-residue polypeptide: Leucine--tRNA ligase (824 aa).

A 'HIGH' region motif is present at residues 42–52 (PYPSGKIHMGH). Positions 581-585 (KMSKS) match the 'KMSKS' region motif. K584 contacts ATP.

It belongs to the class-I aminoacyl-tRNA synthetase family.

It is found in the cytoplasm. The enzyme catalyses tRNA(Leu) + L-leucine + ATP = L-leucyl-tRNA(Leu) + AMP + diphosphate. The protein is Leucine--tRNA ligase of Citrifermentans bemidjiense (strain ATCC BAA-1014 / DSM 16622 / JCM 12645 / Bem) (Geobacter bemidjiensis).